Consider the following 395-residue polypeptide: Phosphoprotein (395 aa).

The tract at residues 178 to 217 (NGVLHGSEIRSKSSSGVIPGVPQSRPQLASSPAHADPAPA) is disordered. A compositionally biased stretch (low complexity) spans 206–217 (ASSPAHADPAPA). The multimerization stretch occupies residues 220–283 (ENVKEIIELL…ITTIKIMDPS (64 aa)).

It belongs to the rubulavirus/avulavirus P protein family. In terms of assembly, homotetramer. Interacts (via multimerization domain) with polymerase L; this interaction forms the polymerase L-P complex. Interacts (via N-terminus) with N0 (via Ncore); this interaction allows P to chaperon N0 to avoid N polymerization before encapsidation. Interacts (via C-terminus) with N-RNA template; this interaction positions the polymerase on the template for both transcription and replication. Interacts with host ARHGAP26; this interaction promotes host RHOA activation. Interacts with host KPNA1 and KPNA6.

The protein resides in the host cytoplasm. Functionally, essential cofactor of the RNA polymerase L that plays a central role in the transcription and replication by forming the polymerase complex with RNA polymerase L and recruiting L to the genomic N-RNA template for RNA synthesis. Also plays a central role in the encapsidation of nascent RNA chains by forming the encapsidation complex with the nucleocapsid protein N (N-P complex). Acts as a chaperone for newly synthesized free N protein, so-called N0, allowing encapsidation of nascent RNA chains during replication. The nucleoprotein protein N prevents excessive phosphorylation of P, which leads to down-regulation of viral transcription/ replication. Participates, together with N, in the formation of viral factories (viroplasms), which are large inclusions in the host cytoplasm where replication takes place. Also plays a role in viral growth by promoting host RHOA activation and thus actin formation via ARHGAP26 inhibition. This Homo sapiens (Human) protein is Phosphoprotein (P/V).